We begin with the raw amino-acid sequence, 251 residues long: 3-dehydroquinate dehydratase (251 aa).

3-dehydroquinate contacts are provided by residues 47–49 and Arg83; that span reads EWR. His144 serves as the catalytic Proton donor/acceptor. Lys171 acts as the Schiff-base intermediate with substrate in catalysis. Residues Arg214, Ser233, and Gln237 each contribute to the 3-dehydroquinate site.

It belongs to the type-I 3-dehydroquinase family. Homodimer.

The catalysed reaction is 3-dehydroquinate = 3-dehydroshikimate + H2O. The protein operates within metabolic intermediate biosynthesis; chorismate biosynthesis; chorismate from D-erythrose 4-phosphate and phosphoenolpyruvate: step 3/7. Involved in the third step of the chorismate pathway, which leads to the biosynthesis of aromatic amino acids. Catalyzes the cis-dehydration of 3-dehydroquinate (DHQ) and introduces the first double bond of the aromatic ring to yield 3-dehydroshikimate. The sequence is that of 3-dehydroquinate dehydratase from Klebsiella pneumoniae (strain 342).